A 299-amino-acid polypeptide reads, in one-letter code: Tyrosine recombinase XerC (299 aa).

One can recognise a Core-binding (CB) domain in the interval 3 to 87 (PQCQSYLQQF…AIKQWGEFLL (85 aa)). Residues 108–287 (PLPKNIDVDS…DFQHLAKVYD (180 aa)) enclose the Tyr recombinase domain. Residues Arg-147, Lys-171, His-239, Arg-242, and His-265 contribute to the active site. Catalysis depends on Tyr-274, which acts as the O-(3'-phospho-DNA)-tyrosine intermediate.

This sequence belongs to the 'phage' integrase family. XerC subfamily. Forms a cyclic heterotetrameric complex composed of two molecules of XerC and two molecules of XerD.

Its subcellular location is the cytoplasm. Functionally, site-specific tyrosine recombinase, which acts by catalyzing the cutting and rejoining of the recombining DNA molecules. The XerC-XerD complex is essential to convert dimers of the bacterial chromosome into monomers to permit their segregation at cell division. It also contributes to the segregational stability of plasmids. This chain is Tyrosine recombinase XerC, found in Shewanella sp. (strain ANA-3).